A 468-amino-acid chain; its full sequence is Interstitial collagenase (468 aa).

The N-terminal stretch at 1–18 is a signal peptide; the sequence is MPGLPLLLLLLWGVGSHG. Positions 19–98 are cleaved as a propeptide — activation peptide; that stretch reads FPAASETQEQ…PRCGVPDVAQ (80 aa). Positions 89–96 match the Cysteine switch motif; the sequence is PRCGVPDV. Cys91 provides a ligand contact to Zn(2+). N-linked (GlcNAc...) asparagine glycosylation is present at Asn119. 2 residues coordinate Ca(2+): Asp123 and Asp157. Residues His167 and Asp169 each contribute to the Zn(2+) site. 4 residues coordinate Ca(2+): Asp174, Gly175, Glu177, and Gln179. Zn(2+) is bound at residue His182. Ca(2+)-binding residues include Gly189, Gly191, and Asp193. His195 provides a ligand contact to Zn(2+). Ca(2+) contacts are provided by Asp197, Glu198, and Asp200. Zn(2+) is bound at residue His217. Glu218 is a catalytic residue. Zn(2+) contacts are provided by His221 and His227. Thr273 is modified (phosphothreonine). Hemopexin repeat units lie at residues 274–323, 324–370, 373–421, and 422–465; these read PKVC…WPHL, PNGL…FGFP, VNHI…FPGI, and GNKV…WFNC. The cysteines at positions 277 and 465 are disulfide-linked. 2 residues coordinate Ca(2+): Asp284 and Gln328. A Phosphotyrosine; by PKDCC modification is found at Tyr359. Ca(2+)-binding residues include Asp377 and Asp426.

This sequence belongs to the peptidase M10A family. Ca(2+) is required as a cofactor. Zn(2+) serves as cofactor. Tyrosine phosphorylated in platelets by PKDCC/VLK.

The protein localises to the secreted. Its subcellular location is the extracellular space. It localises to the extracellular matrix. It catalyses the reaction Cleavage of the triple helix of collagen at about three-quarters of the length of the molecule from the N-terminus, at 775-Gly-|-Ile-776 in the alpha1(I) chain. Cleaves synthetic substrates and alpha-macroglobulins at bonds where P1' is a hydrophobic residue.. Its activity is regulated as follows. Can be activated without removal of the activation peptide. Functionally, cleaves collagens of types I, II, and III at one site in the helical domain. Also cleaves collagens of types VII and X. The sequence is that of Interstitial collagenase (MMP1) from Oryctolagus cuniculus (Rabbit).